The sequence spans 113 residues: UPF0212 protein MmarC6_1165 (113 aa).

It belongs to the UPF0212 family.

In Methanococcus maripaludis (strain C6 / ATCC BAA-1332), this protein is UPF0212 protein MmarC6_1165.